A 243-amino-acid chain; its full sequence is MSGHSKWSTIKRKKGALDAKRNKIFTKLIREISIAAKMGGGDIDSNPRLRLAINKARVSNMPKDNIEKAIKKGIGDNTGAEYFELTYEAYALHGVALIIKCLTDNKNRTASEVRSVLSKNGASLGAPGSVSYMFHKKGLISYSLDKYPEDEIMELALEAGAEDIYSEGSQIEVITSAETFEAISSVLRTKFEEDIAEIALLPENKISLNKEQIDKVLSLIEKLEDFDDVQEVVHNLEIIDEID.

The protein belongs to the TACO1 family.

It is found in the cytoplasm. This chain is Probable transcriptional regulatory protein BH0025, found in Borrelia hermsii (strain HS1 / DAH).